The chain runs to 543 residues: Chaperonin GroEL 2 (543 aa).

ATP is bound by residues 29–32 (TLGP), 86–90 (DGTTT), Gly413, 477–479 (DAA), and Asp493. The tract at residues 523–543 (PQEPEPAAGGHGHGHQHGPGF) is disordered. Positions 534-543 (GHGHQHGPGF) are enriched in basic residues.

It belongs to the chaperonin (HSP60) family. Forms a cylinder of 14 subunits composed of two heptameric rings stacked back-to-back. Interacts with the co-chaperonin GroES.

The protein localises to the cytoplasm. It carries out the reaction ATP + H2O + a folded polypeptide = ADP + phosphate + an unfolded polypeptide.. Functionally, together with its co-chaperonin GroES, plays an essential role in assisting protein folding. The GroEL-GroES system forms a nano-cage that allows encapsulation of the non-native substrate proteins and provides a physical environment optimized to promote and accelerate protein folding. The protein is Chaperonin GroEL 2 of Salinispora tropica (strain ATCC BAA-916 / DSM 44818 / JCM 13857 / NBRC 105044 / CNB-440).